The sequence spans 115 residues: MEIEMLYSKIHRATVTDANLNYVGSITIDERLMKAANLLEFQKVEILDINNGERFQTYVIKGEKKGEICLNGAAARKVCIGDIIIIVSYASMKRKKAKNFSPTIVHVNEKNEINE.

The active-site Schiff-base intermediate with substrate; via pyruvic acid is the S25. Pyruvic acid (Ser) is present on S25. Position 57 (T57) interacts with substrate. Residue Y58 is the Proton donor of the active site. 72 to 74 (GAA) serves as a coordination point for substrate.

Belongs to the PanD family. As to quaternary structure, heterooctamer of four alpha and four beta subunits. Pyruvate is required as a cofactor. In terms of processing, is synthesized initially as an inactive proenzyme, which is activated by self-cleavage at a specific serine bond to produce a beta-subunit with a hydroxyl group at its C-terminus and an alpha-subunit with a pyruvoyl group at its N-terminus.

The protein resides in the cytoplasm. It carries out the reaction L-aspartate + H(+) = beta-alanine + CO2. It participates in cofactor biosynthesis; (R)-pantothenate biosynthesis; beta-alanine from L-aspartate: step 1/1. Catalyzes the pyruvoyl-dependent decarboxylation of aspartate to produce beta-alanine. This chain is Aspartate 1-decarboxylase, found in Campylobacter fetus subsp. fetus (strain 82-40).